Consider the following 424-residue polypeptide: 3-isopropylmalate dehydratase large subunit (424 aa).

3 residues coordinate [4Fe-4S] cluster: Cys299, Cys359, and Cys362.

Belongs to the aconitase/IPM isomerase family. LeuC type 2 subfamily. In terms of assembly, heterodimer of LeuC and LeuD. Requires [4Fe-4S] cluster as cofactor.

The enzyme catalyses (2R,3S)-3-isopropylmalate = (2S)-2-isopropylmalate. Its pathway is amino-acid biosynthesis; L-leucine biosynthesis; L-leucine from 3-methyl-2-oxobutanoate: step 2/4. Its function is as follows. Catalyzes the isomerization between 2-isopropylmalate and 3-isopropylmalate, via the formation of 2-isopropylmaleate. This chain is 3-isopropylmalate dehydratase large subunit, found in Hydrogenobaculum sp. (strain Y04AAS1).